The sequence spans 203 residues: Small ribosomal subunit protein uS4 (203 aa).

An S4 RNA-binding domain is found at 93 to 156; sequence RRLDNVVYRL…MKVPAILEAV (64 aa).

This sequence belongs to the universal ribosomal protein uS4 family. In terms of assembly, part of the 30S ribosomal subunit. Contacts protein S5. The interaction surface between S4 and S5 is involved in control of translational fidelity.

Its function is as follows. One of the primary rRNA binding proteins, it binds directly to 16S rRNA where it nucleates assembly of the body of the 30S subunit. In terms of biological role, with S5 and S12 plays an important role in translational accuracy. This chain is Small ribosomal subunit protein uS4, found in Streptococcus pyogenes serotype M49 (strain NZ131).